A 1091-amino-acid chain; its full sequence is Neural cell adhesion molecule 1 (1091 aa).

Residues 1–19 (MLPAAALPWTLFFLGAAAS) form the signal peptide. Ig-like C2-type domains are found at residues 20-113 (LQVD…VNVK), 116-205 (QKLM…KDIQ), 212-301 (PSVR…ATIH), 308-403 (PKIT…LEVQ), and 406-495 (PKLQ…FILV). Residues 20–711 (LQVDIVPSQG…STSPTSGLGT (692 aa)) lie on the Extracellular side of the membrane. 2 cysteine pairs are disulfide-bonded: cysteine 41–cysteine 96 and cysteine 139–cysteine 189. Heparin-binding positions include 152 to 156 (KHKGR) and 161 to 165 (KKDVR). N-linked (GlcNAc...) asparagine glycosylation occurs at asparagine 222. Cysteine 235 and cysteine 287 are disulfide-bonded. Residues asparagine 315, asparagine 347, asparagine 423, asparagine 449, and asparagine 478 are each glycosylated (N-linked (GlcNAc...) asparagine). A disulfide bridge connects residues cysteine 329 and cysteine 385. Cysteine 426 and cysteine 479 are oxidised to a cystine. 2 Fibronectin type-III domains span residues 499-598 (TPSS…TQPV) and 600-696 (EPSA…SAQP). The helical transmembrane segment at 712-729 (AAIVGILIVIFVLLLVAV) threads the bilayer. The Cytoplasmic portion of the chain corresponds to 730 to 1091 (DVTCYFLNKC…ATEIRHLQQK (362 aa)). Disordered regions lie at residues 756 to 809 (GAKG…TEPE), 840 to 916 (ATAQ…NNLS), 937 to 1023 (ETSK…GTFK), and 1041 to 1091 (TPAS…LQQK). The segment covering 758–799 (KGKDMEEGKAAFSKDESKEPIVEVRTEEERTPNHDGGKHTEP) has biased composition (basic and acidic residues). Residues 845–856 (SPTSETTTLTSS) show a composition bias toward low complexity. 2 stretches are compositionally biased toward polar residues: residues 904–916 (DTPS…NNLS) and 980–1012 (QPST…PSQN). 2 stretches are compositionally biased toward basic and acidic residues: residues 1013–1023 (EDFKMDEGTFK) and 1068–1091 (KTEK…LQQK).

Polysialylated by ST8SIA2 and ST8SIA4. Polysialylation modulates cell interactions by confering both attractive and repulsive properties that are highly regulated by ST8SIA2 and ST8SIA4. Polysialylation is formed on a-2,3-linked sialic acid of core glycans.

The protein localises to the cell membrane. In terms of biological role, this protein is a cell adhesion molecule involved in neuron-neuron adhesion, neurite fasciculation, outgrowth of neurites, etc. The sequence is that of Neural cell adhesion molecule 1 from Gallus gallus (Chicken).